A 235-amino-acid polypeptide reads, in one-letter code: Large ribosomal subunit protein uL1 (235 aa).

This sequence belongs to the universal ribosomal protein uL1 family. Part of the 50S ribosomal subunit.

Its function is as follows. Binds directly to 23S rRNA. The L1 stalk is quite mobile in the ribosome, and is involved in E site tRNA release. Protein L1 is also a translational repressor protein, it controls the translation of the L11 operon by binding to its mRNA. The chain is Large ribosomal subunit protein uL1 from Citrobacter koseri (strain ATCC BAA-895 / CDC 4225-83 / SGSC4696).